The sequence spans 443 residues: Threonine/serine transporter TdcC (443 aa).

11 helical membrane passes run 22-42 (TTWTLGLFGTAIGAGVLFFPI), 44-64 (AGFGGLIPILVMLVLAYPIAF), 97-117 (GVVITFLYFFAICPLLWIYGV), 135-155 (ALNRGFVALFLLLLMAVIIWF), 163-183 (VMSFLVWPFIASLVLISLSLI), 207-227 (ILVTVWLGISIMVFSFNFSPI), 259-279 (ASILMVAVVMFFAFSCLFALS), 319-339 (ASIIALVAIFKSFFGHYLGTL), 366-386 (LSMVFIMGSTWLVAYVNPNIL), 389-409 (IEAMGAPIIASLLCLLPMYAI), and 422-442 (IDNVFVTAIGLLTISNIVYKV).

Belongs to the amino acid/polyamine transporter 2 family. SdaC/TdcC subfamily.

The protein resides in the cell inner membrane. It carries out the reaction L-threonine(in) + H(+)(in) = L-threonine(out) + H(+)(out). The enzyme catalyses L-serine(in) + H(+)(in) = L-serine(out) + H(+)(out). In terms of biological role, involved in the import of threonine and serine into the cell, with the concomitant import of a proton (symport system). In Escherichia fergusonii (strain ATCC 35469 / DSM 13698 / CCUG 18766 / IAM 14443 / JCM 21226 / LMG 7866 / NBRC 102419 / NCTC 12128 / CDC 0568-73), this protein is Threonine/serine transporter TdcC.